A 908-amino-acid chain; its full sequence is Translation initiation factor IF-2 (908 aa).

Residues 52-318 (QSHGQEEKRR…RSSQSSQHKF (267 aa)) form a disordered region. Residues 65–84 (KSKTTSTARVTGSSGKSKSV) show a composition bias toward polar residues. 6 stretches are compositionally biased toward basic and acidic residues: residues 94–108 (FEKP…ELAA), 120–138 (AAKD…EERQ), 176–185 (IEVKPKDQPK), 193–238 (PKVE…EQMR), 270–280 (SFEKERREIKR), and 294–303 (KNQDEREIKN). A tr-type G domain is found at 409–578 (TRPPVVTIMG…SLQAELMELE (170 aa)). Positions 418 to 425 (GHVDHGKT) are G1. Residue 418-425 (GHVDHGKT) participates in GTP binding. Residues 443-447 (GITQH) are G2. A G3 region spans residues 464 to 467 (DTPG). GTP-binding positions include 464 to 468 (DTPGH) and 518 to 521 (NKMD). The segment at 518–521 (NKMD) is G4. Positions 554-556 (SAK) are G5.

It belongs to the TRAFAC class translation factor GTPase superfamily. Classic translation factor GTPase family. IF-2 subfamily.

Its subcellular location is the cytoplasm. One of the essential components for the initiation of protein synthesis. Protects formylmethionyl-tRNA from spontaneous hydrolysis and promotes its binding to the 30S ribosomal subunits. Also involved in the hydrolysis of GTP during the formation of the 70S ribosomal complex. The sequence is that of Translation initiation factor IF-2 from Psychrobacter cryohalolentis (strain ATCC BAA-1226 / DSM 17306 / VKM B-2378 / K5).